The following is a 178-amino-acid chain: DNA-directed RNA polymerase subunit beta (178 aa).

This sequence belongs to the RNA polymerase beta chain family. The RNAP catalytic core consists of 2 alpha, 1 beta, 1 beta' and 1 omega subunit. When a sigma factor is associated with the core the holoenzyme is formed, which can initiate transcription.

It catalyses the reaction RNA(n) + a ribonucleoside 5'-triphosphate = RNA(n+1) + diphosphate. Its function is as follows. DNA-dependent RNA polymerase catalyzes the transcription of DNA into RNA using the four ribonucleoside triphosphates as substrates. In Liberibacter asiaticus (Citrus greening disease), this protein is DNA-directed RNA polymerase subunit beta (rpoB).